The chain runs to 273 residues: Probable branched-chain-amino-acid aminotransferase (273 aa).

K133 carries the post-translational modification N6-(pyridoxal phosphate)lysine.

This sequence belongs to the class-IV pyridoxal-phosphate-dependent aminotransferase family. Pyridoxal 5'-phosphate serves as cofactor.

The enzyme catalyses L-leucine + 2-oxoglutarate = 4-methyl-2-oxopentanoate + L-glutamate. It carries out the reaction L-isoleucine + 2-oxoglutarate = (S)-3-methyl-2-oxopentanoate + L-glutamate. It catalyses the reaction L-valine + 2-oxoglutarate = 3-methyl-2-oxobutanoate + L-glutamate. It participates in amino-acid biosynthesis; L-isoleucine biosynthesis; L-isoleucine from 2-oxobutanoate: step 4/4. Its pathway is amino-acid biosynthesis; L-leucine biosynthesis; L-leucine from 3-methyl-2-oxobutanoate: step 4/4. It functions in the pathway amino-acid biosynthesis; L-valine biosynthesis; L-valine from pyruvate: step 4/4. Acts on leucine, isoleucine and valine. This is Probable branched-chain-amino-acid aminotransferase (ilvE) from Thermotoga maritima (strain ATCC 43589 / DSM 3109 / JCM 10099 / NBRC 100826 / MSB8).